Reading from the N-terminus, the 228-residue chain is Lipoprotein LpqN (228 aa).

The N-terminal stretch at 1-19 (MKHFTAAVATVALSLALAG) is a signal peptide. Cys-20 carries N-palmitoyl cysteine lipidation. Cys-20 is lipidated: S-diacylglycerol cysteine. The disordered stretch occupies residues 26 to 53 (TDSAPTTSPTTTSPTTSTTTTSATTSAQ). The span at 28–52 (SAPTTSPTTTSPTTSTTTTSATTSA) shows a compositional bias: low complexity.

As to quaternary structure, interacts with the periplasmic loop domains of the mycolate transporters MmpL3 and MmpL11. Also interacts with secreted cell envelope biosynthetic enzymes such as Ag85A. These interactions are weak and may require a putative mycobacterial adapter protein or molecule. Interacts with human ubiquitin ligase CBL.

It localises to the cell membrane. Its subcellular location is the secreted. Involved in cell envelope biogenesis. May act as a membrane fusion protein, connecting MmpL transporters with periplasmic proteins, and play a role in cell envelope lipid changes during biofilm maturation. In terms of biological role, is also a virulence factor required for intracellular survival. Associates with CBL, a host ubiquitin ligase, and probably blocks the normal functions of CBL and disturbs CBL-mediated antibacterial activity. Interaction counteracts antibacterial defense but causes a reciprocal enhancement of antiviral defense. In Mycobacterium tuberculosis (strain ATCC 25618 / H37Rv), this protein is Lipoprotein LpqN.